Here is a 100-residue protein sequence, read N- to C-terminus: Urease subunit gamma (100 aa).

It belongs to the urease gamma subunit family. As to quaternary structure, heterotrimer of UreA (gamma), UreB (beta) and UreC (alpha) subunits. Three heterotrimers associate to form the active enzyme.

The protein resides in the cytoplasm. The catalysed reaction is urea + 2 H2O + H(+) = hydrogencarbonate + 2 NH4(+). It participates in nitrogen metabolism; urea degradation; CO(2) and NH(3) from urea (urease route): step 1/1. The chain is Urease subunit gamma from Cereibacter sphaeroides (strain ATCC 17025 / ATH 2.4.3) (Rhodobacter sphaeroides).